The primary structure comprises 210 residues: Insulin receptor (210 aa).

Residues 1–96 enclose the Fibronectin type-III domain; it reads VSNSSSQIIL…SQILKELEES (96 aa). Asparagine 3, asparagine 21, and asparagine 68 each carry an N-linked (GlcNAc...) asparagine glycan. A disordered region spans residues 55–78; it reads WSPPFESEDSQKHNQSEYEDSAGE. Positions 103–111 are insulin-binding; sequence EDYLHNVVF. Positions 116–169 are disordered; the sequence is TSSGTGAEDPRPSRKRRSLGDVGNVTVAVPTVAAFPNTSSTSTPTSPEEHRPFE. Residues 133 to 210 are Extracellular-facing; sequence SLGDVGNVTV…EERCSVAAYV (78 aa). Residues 137 to 161 show a composition bias toward low complexity; the sequence is VGNVTVAVPTVAAFPNTSSTSTPTS. Asparagine 139 and asparagine 152 each carry an N-linked (GlcNAc...) asparagine glycan. Cysteine 195 and cysteine 204 are disulfide-bonded.

The protein belongs to the protein kinase superfamily. Tyr protein kinase family. Insulin receptor subfamily. As to quaternary structure, tetramer of 2 alpha and 2 beta chains linked by disulfide bonds. The alpha chains carry the insulin-binding regions, while the beta chains carry the kinase domain. Forms a hybrid receptor with IGF1R, the hybrid is a tetramer consisting of 1 alpha chain and 1 beta chain of INSR and 1 alpha chain and 1 beta chain of IGF1R. Interacts with SORBS1 but dissociates from it following insulin stimulation. Binds SH2B2. Activated form of INSR interacts (via phosphorylated Tyrosine) with the PTB/PID domains of IRS1 and SHC1. The sequences surrounding the phosphorylated NPXY motif contribute differentially to either IRS1 or SHC1 recognition. Interacts (via tyrosines in the C-terminus) with IRS2 (via PTB domain and 591-786 AA); the 591-786 would be the primary anchor of IRS2 to INSR while the PTB domain would have a stabilizing action on the interaction with INSR. Interacts with the SH2 domains of the 85 kDa regulatory subunit of PI3K (PIK3R1) in vitro, when autophosphorylated on tyrosine residues. Interacts with SOCS7. Interacts with SOCS3. Interacts with SOCS1. Interacts with CAV2 (tyrosine-phosphorylated form); the interaction is increased with 'Tyr-27'phosphorylation of CAV2. Interacts with ARRB2. Interacts with GRB10; this interaction blocks the association between IRS1/IRS2 and INSR, significantly reduces insulin-stimulated tyrosine phosphorylation of IRS1 and IRS2 and thus decreases insulin signaling. Interacts with GRB7. Interacts with PDPK1. Interacts with GRB14 (via BPS domain). Interacts (via subunit alpha) with ENPP1 (via 485-599 AA); this interaction blocks autophosphorylation. Interacts with PTPRE. Interacts with STAT5B (via SH2 domain). Interacts with PTPRF. Interacts with ATIC; ATIC together with PRKAA2/AMPK2 and HACD3/PTPLAD1 is proposed to be part of a signaling netwok regulating INSR autophosphorylation and endocytosis. Interacts with the insulin receptor SORL1; this interaction strongly increases its surface exposure, hence strengthens insulin signal reception. Interacts (tyrosine phosphorylated) with CCDC88A/GIV (via SH2-like region); binding requires autophosphorylation of the INSR C-terminal region. Interacts with GNAI3; the interaction is probably mediated by CCDC88A/GIV. Interacts with LMBRD1. Interacts (in response to insulin stimulation) with NCK1; this interaction may recruit PTPN1 to mediate INSR dephosphorylation. In terms of processing, after being transported from the endoplasmic reticulum to the Golgi apparatus, the single glycosylated precursor is further glycosylated and then cleaved, followed by its transport to the plasma membrane. Post-translationally, autophosphorylated on tyrosine residues in response to insulin. Dephosphorylated by PTPN1, PTPRE and PTPRF. Dephosphorylated by PTPN2; down-regulates insulin-induced signaling. S-nitrosylation by BLVRB inhibits the receptor tyrosine kinase, thereby inhibiting insulin signaling.

It is found in the cell membrane. Its subcellular location is the late endosome. The protein resides in the lysosome. It catalyses the reaction L-tyrosyl-[protein] + ATP = O-phospho-L-tyrosyl-[protein] + ADP + H(+). With respect to regulation, activated in response to insulin. Autophosphorylation activates the kinase activity. PTPN1, PTPRE and PTPRF dephosphorylate important tyrosine residues, thereby reducing INSR activity. Inhibited by ENPP1. GRB10 and GRB14 inhibit the catalytic activity of the INSR, they block access of substrates to the activated receptor. SOCS1 and SOCS3 act as negative regulators of INSR activity, they bind to the activated INRS and interfere with the phosphorylation of INSR substrates. Its function is as follows. Receptor tyrosine kinase which mediates the pleiotropic actions of insulin. Binding of insulin leads to phosphorylation of several intracellular substrates, including, insulin receptor substrates (IRS1, 2, 3, 4), SHC, GAB1, CBL and other signaling intermediates. Each of these phosphorylated proteins serve as docking proteins for other signaling proteins that contain Src-homology-2 domains (SH2 domain) that specifically recognize different phosphotyrosine residues, including the p85 regulatory subunit of PI3K and SHP2. Phosphorylation of IRSs proteins lead to the activation of two main signaling pathways: the PI3K-AKT/PKB pathway, which is responsible for most of the metabolic actions of insulin, and the Ras-MAPK pathway, which regulates expression of some genes and cooperates with the PI3K pathway to control cell growth and differentiation. Binding of the SH2 domains of PI3K to phosphotyrosines on IRS1 leads to the activation of PI3K and the generation of phosphatidylinositol-(3, 4, 5)-triphosphate (PIP3), a lipid second messenger, which activates several PIP3-dependent serine/threonine kinases, such as PDPK1 and subsequently AKT/PKB. The net effect of this pathway is to produce a translocation of the glucose transporter SLC2A4/GLUT4 from cytoplasmic vesicles to the cell membrane to facilitate glucose transport. Moreover, upon insulin stimulation, activated AKT/PKB is responsible for: anti-apoptotic effect of insulin by inducing phosphorylation of BAD; regulates the expression of gluconeogenic and lipogenic enzymes by controlling the activity of the winged helix or forkhead (FOX) class of transcription factors. Another pathway regulated by PI3K-AKT/PKB activation is mTORC1 signaling pathway which regulates cell growth and metabolism and integrates signals from insulin. AKT mediates insulin-stimulated protein synthesis by phosphorylating TSC2 thereby activating mTORC1 pathway. The Ras/RAF/MAP2K/MAPK pathway is mainly involved in mediating cell growth, survival and cellular differentiation of insulin. Phosphorylated IRS1 recruits GRB2/SOS complex, which triggers the activation of the Ras/RAF/MAP2K/MAPK pathway. In addition to binding insulin, the insulin receptor can bind insulin-like growth factors (IGFI and IGFII). When present in a hybrid receptor with IGF1R, binds IGF1. In adipocytes, inhibits lipolysis. The polypeptide is Insulin receptor (INSR) (Macaca mulatta (Rhesus macaque)).